A 44-amino-acid polypeptide reads, in one-letter code: Protein PsbN (44 aa).

Residues 6 to 26 traverse the membrane as a helical segment; sequence FFFTIFVWFLLISVTGYSIYV.

It belongs to the PsbN family.

It is found in the plastid. The protein localises to the chloroplast thylakoid membrane. May play a role in photosystem I and II biogenesis. The polypeptide is Protein PsbN (Bigelowiella natans (Pedinomonas minutissima)).